The sequence spans 211 residues: Interleukin-6 (211 aa).

The first 24 residues, 1–24 (MKFLSARDFHPVAFLGLMLVTTTA), serve as a signal peptide directing secretion. Cystine bridges form between cysteine 70–cysteine 76 and cysteine 99–cysteine 109.

This sequence belongs to the IL-6 superfamily. Component of a hexamer of two molecules each of IL6, IL6R and IL6ST; first binds to IL6R to associate with the signaling subunit IL6ST. Interacts with IL6R (via the N-terminal ectodomain); this interaction may be affected by IL6R-binding with SORL1, hence decreasing IL6 cis signaling. Interacts with SORL1 (via the N-terminal ectodomain); this interaction leads to IL6 internalization and lysosomal degradation. May form a trimeric complex with the soluble SORL1 ectodomain and soluble IL6R receptor; this interaction might stabilize circulating IL6, hence promoting IL6 trans signaling. In terms of processing, N- and O-glycosylated. In terms of tissue distribution, expressed by dendritic cells and macrophages. Expressed by activated follicular B cells. Abundantly expressed in the central nervous system (CNS), particularly the hypothalamic region.

It is found in the secreted. Its function is as follows. Cytokine with a wide variety of biological functions in immunity, tissue regeneration, and metabolism. Binds to IL6R, then the complex associates to the signaling subunit IL6ST/gp130 to trigger the intracellular IL6-signaling pathway. The interaction with the membrane-bound IL6R and IL6ST stimulates 'classic signaling', whereas the binding of IL6 and soluble IL6R to IL6ST stimulates 'trans-signaling'. Alternatively, 'cluster signaling' occurs when membrane-bound IL6:IL6R complexes on transmitter cells activate IL6ST receptors on neighboring receiver cells. In terms of biological role, IL6 is a potent inducer of the acute phase response. Rapid production of IL6 contributes to host defense during infection and tissue injury, but excessive IL6 synthesis is involved in disease pathology. In the innate immune response, is synthesized by myeloid cells, such as macrophages and dendritic cells, upon recognition of pathogens through toll-like receptors (TLRs) at the site of infection or tissue injury. In the adaptive immune response, is required for the differentiation of B-cells into immunoglolin-secreting cells. Plays a major role in the differentiation of CD4(+) T cell subsets. Essential factor for the development of T follicular helper (Tfh) cells that are required for the induction of germinal-center formation. Together with IL21, controls the early generation of Tfh cells and are critical for an effective antibody response to acute viral infection. Required to drive naive CD4(+) T cells to the Th17 lineage, through 'cluster signaling' by dendritic cells. Also required for proliferation of myeloma cells and the survival of plasmablast cells. Functionally, acts as an essential factor in bone homeostasis and on vessels directly or indirectly by induction of VEGF, resulting in increased angiogenesis activity and vascular permeability. Induces, through 'trans-signaling' and synergistically with IL1B and TNF, the production of VEGF. Involved in metabolic controls, is discharged into the bloodstream after muscle contraction increasing lipolysis and improving insulin resistance. 'Trans-signaling' in central nervous system regulates energy and glucose homeostasis. Mediates, through GLP-1, crosstalk between insulin-sensitive tissues, intestinal L cells and pancreatic islets to adapt to changes in insulin demand. Also acts as a myokine. Plays a protective role during liver injury, being required for maintenance of tissue regeneration. Also has a pivotal role in iron metabolism by regulating HAMP/hepcidin expression upon inflammation or bacterial infection. Through activation of IL6ST-YAP-NOTCH pathway, induces inflammation-induced epithelial regeneration. The sequence is that of Interleukin-6 from Mus musculus (Mouse).